The chain runs to 502 residues: Probable cytosol aminopeptidase (502 aa).

The Mn(2+) site is built by lysine 275 and aspartate 280. Residue lysine 287 is part of the active site. Residues aspartate 298, aspartate 357, and glutamate 359 each contribute to the Mn(2+) site. Residue arginine 361 is part of the active site.

Belongs to the peptidase M17 family. It depends on Mn(2+) as a cofactor.

It is found in the cytoplasm. The enzyme catalyses Release of an N-terminal amino acid, Xaa-|-Yaa-, in which Xaa is preferably Leu, but may be other amino acids including Pro although not Arg or Lys, and Yaa may be Pro. Amino acid amides and methyl esters are also readily hydrolyzed, but rates on arylamides are exceedingly low.. It catalyses the reaction Release of an N-terminal amino acid, preferentially leucine, but not glutamic or aspartic acids.. Presumably involved in the processing and regular turnover of intracellular proteins. Catalyzes the removal of unsubstituted N-terminal amino acids from various peptides. This is Probable cytosol aminopeptidase from Ralstonia pickettii (strain 12J).